The sequence spans 87 residues: Small ribosomal subunit protein bS20 (87 aa).

The protein belongs to the bacterial ribosomal protein bS20 family.

Binds directly to 16S ribosomal RNA. This is Small ribosomal subunit protein bS20 from Corynebacterium urealyticum (strain ATCC 43042 / DSM 7109).